Consider the following 515-residue polypeptide: Membrane-bound transcription factor site-2 protease (515 aa).

The Cytoplasmic portion of the chain corresponds to 1 to 3 (MIP). The chain crosses the membrane as a helical span at residues 4-24 (VSLLVVVVGGWTAVYLADLVL). Residues 25–74 (KSSVYFKHSYEDWLENNGLSISPFHIRWQTSIFNRAFYSWGRRKARMLYQ) are Lumenal-facing. The next 2 membrane-spanning stretches (helical) occupy residues 75-95 (WFNF…FLLG) and 96-107 (KTLMQTLAQMMA). Residues 108-140 (DSPSPYSSSSSSSSSSSSSSSSSSSLHNEQVLQ) are Lumenal-facing. The helical transmembrane segment at 141-165 (VVVPGINLPVNQLTYFFAAVLISGV) threads the bilayer. His-167 is a binding site for Zn(2+). Glu-168 is a catalytic residue. The next 3 membrane-spanning stretches (helical) occupy residues 170–182 (GHGI…QVRF), 183–205 (NGFG…TTHL), and 225–247 (FVLA…PFYY). His-171 contacts Zn(2+). The Lumenal segment spans residues 248–442 (TGVGVLITEV…LPVIVETFVK (195 aa)). A glycan (N-linked (GlcNAc...) asparagine) is linked at Asn-333. 2 consecutive transmembrane segments (helical) span residues 443 to 460 (YLIS…VPCF) and 461 to 472 (ALDGQWILNSFL). Residues 473–488 (DATLTSVIGDNDVKDL) are Lumenal-facing. A helical membrane pass occupies residues 489–509 (IGFFILLGGSVLLAANVTLGL). Residues 510–515 (WMVTAR) lie on the Cytoplasmic side of the membrane.

This sequence belongs to the peptidase M50A family. Requires Zn(2+) as cofactor.

It localises to the membrane. The protein localises to the cytoplasm. The protein resides in the golgi apparatus membrane. It catalyses the reaction Cleaves several transcription factors that are type-2 transmembrane proteins within membrane-spanning domains. Known substrates include sterol regulatory element-binding protein (SREBP) -1, SREBP-2 and forms of the transcriptional activator ATF6. SREBP-2 is cleaved at the site 477-DRSRILL-|-CVLTFLCLSFNPLTSLLQWGGA-505. The residues Asn-Pro, 11 residues distal to the site of cleavage in the membrane-spanning domain, are important for cleavage by S2P endopeptidase. Replacement of either of these residues does not prevent cleavage, but there is no cleavage if both of these residues are replaced.. Functionally, zinc metalloprotease that mediates intramembrane proteolysis of proteins such as ATF6, ATF6B, SREBF1/SREBP1 and SREBF2/SREBP2. Catalyzes the second step in the proteolytic activation of the sterol regulatory element-binding proteins (SREBPs) SREBF1/SREBP1 and SREBF2/SREBP2: cleaves SREBPs within the first transmembrane segment, thereby releasing the N-terminal segment with a portion of the transmembrane segment attached. Mature N-terminal SREBP fragments shuttle to the nucleus and activate gene transcription. Also mediates the second step in the proteolytic activation of the cyclic AMP-dependent transcription factor ATF-6 (ATF6 and ATF6B). Involved in intramembrane proteolysis during bone formation. In astrocytes and osteoblasts, upon DNA damage and ER stress, mediates the second step of the regulated intramembrane proteolytic activation of the transcription factor CREB3L1, leading to the inhibition of cell-cycle progression. The polypeptide is Membrane-bound transcription factor site-2 protease (Mbtps2) (Mus musculus (Mouse)).